Reading from the N-terminus, the 47-residue chain is Ruminococcin-A (47 aa).

An N-terminal signal peptide occupies residues 1 to 23; the sequence is MRNDVLTLTNPMEEKELEQILGG. T30 and T39 each carry 2,3-didehydrobutyrine. Positions 30–35 form a cross-link, beta-methyllanthionine (Thr-Cys); sequence TISHEC. The segment at residues 32 to 46 is a cross-link (lanthionine (Ser-Cys)); the sequence is SHECNMNTWQFLFTC. Positions 45–47 form a cross-link, beta-methyllanthionine (Thr-Cys); the sequence is TCC.

Post-translationally, maturation of lantibiotics involves the enzymatic conversion of Thr, and Ser into dehydrated AA and the formation of thioether bonds with cysteine. This is followed by membrane translocation and cleavage of the modified precursor. It is not established whether the 2,3-didehydrobutyrine is the E- or Z-isomer.

It localises to the secreted. Its function is as follows. Lanthionine-containing peptide antibiotic (lantibiotic) active on Gram-positive bacteria. The bactericidal activity of lantibiotics is based on depolarization of energized bacterial cytoplasmic membranes, initiated by the formation of aqueous transmembrane pores. Ruminococcin A is a broad spectrum bacteriocin exhibiting activity against a wide range of pathogenic clostridia and B.longum. This Mediterraneibacter gnavus (Ruminococcus gnavus) protein is Ruminococcin-A (rumA1).